A 167-amino-acid polypeptide reads, in one-letter code: MINVEIVRHYNKWREHKQINKSLIKKITQNILLRFDNFSKIKQFELSILLTNAAEILILNKQFRNIEKATNVLSFPSNELNWQDLYSKLEFLGDSDYMHLGDIAFCYEVIYNESCEQHKTFENHFIHLLIHSILHLIGFDHQNDTEANIMENLEIEILSYFGIFPPY.

The Zn(2+) site is built by His131, His135, and His141.

It belongs to the endoribonuclease YbeY family. It depends on Zn(2+) as a cofactor.

The protein resides in the cytoplasm. Single strand-specific metallo-endoribonuclease involved in late-stage 70S ribosome quality control and in maturation of the 3' terminus of the 16S rRNA. The chain is Endoribonuclease YbeY from Rickettsia rickettsii (strain Iowa).